The following is a 582-amino-acid chain: uncharacterized protein (582 aa).

An N-terminal signal peptide occupies residues 1 to 27 (MNYAVLPPELNSLRMFTGAGSAPMLAA). Residues 241 to 257 (GNGRAGLPGSGNVGNGN) are compositionally biased toward gly residues. Residues 241 to 278 (GNGRAGLPGSGNVGNGNLGNSNLGSGNTGNSNVGFGNT) are disordered. The segment covering 258–278 (LGNSNLGSGNTGNSNVGFGNT) has biased composition (low complexity).

It belongs to the mycobacterial PPE family.

This is an uncharacterized protein from Mycobacterium tuberculosis (strain ATCC 25618 / H37Rv).